We begin with the raw amino-acid sequence, 404 residues long: Sulfate adenylyltransferase (404 aa).

Belongs to the sulfate adenylyltransferase family.

It carries out the reaction sulfate + ATP + H(+) = adenosine 5'-phosphosulfate + diphosphate. The protein operates within sulfur metabolism; hydrogen sulfide biosynthesis; sulfite from sulfate: step 1/3. In Chlorobium chlorochromatii (strain CaD3), this protein is Sulfate adenylyltransferase.